The chain runs to 131 residues: NADH dehydrogenase [ubiquinone] 1 alpha subcomplex subunit 6 (131 aa).

It belongs to the complex I LYR family. In terms of assembly, mammalian complex I is composed of 45 different subunits.

The protein localises to the mitochondrion inner membrane. In terms of biological role, accessory subunit of the mitochondrial membrane respiratory chain NADH dehydrogenase (Complex I), that is believed to be not involved in catalysis. Required for proper complex I assembly. Complex I functions in the transfer of electrons from NADH to the respiratory chain. The immediate electron acceptor for the enzyme is believed to be ubiquinone. The chain is NADH dehydrogenase [ubiquinone] 1 alpha subcomplex subunit 6 from Mus musculus (Mouse).